The primary structure comprises 457 residues: Siroheme synthase (457 aa).

Residues Met1–Thr204 form a precorrin-2 dehydrogenase /sirohydrochlorin ferrochelatase region. Residues Asp22–Val23 and Leu43–Thr44 each bind NAD(+). Ser128 is modified (phosphoserine). The segment at Gly216–His457 is uroporphyrinogen-III C-methyltransferase. Pro225 serves as a coordination point for S-adenosyl-L-methionine. The active-site Proton acceptor is Asp248. The active-site Proton donor is Lys270. S-adenosyl-L-methionine contacts are provided by residues Gly301–Asp303, Ile306, Thr331–Ala332, Met382, and Gly411.

The protein in the N-terminal section; belongs to the precorrin-2 dehydrogenase / sirohydrochlorin ferrochelatase family. In the C-terminal section; belongs to the precorrin methyltransferase family.

The enzyme catalyses uroporphyrinogen III + 2 S-adenosyl-L-methionine = precorrin-2 + 2 S-adenosyl-L-homocysteine + H(+). The catalysed reaction is precorrin-2 + NAD(+) = sirohydrochlorin + NADH + 2 H(+). It carries out the reaction siroheme + 2 H(+) = sirohydrochlorin + Fe(2+). It functions in the pathway cofactor biosynthesis; adenosylcobalamin biosynthesis; precorrin-2 from uroporphyrinogen III: step 1/1. The protein operates within cofactor biosynthesis; adenosylcobalamin biosynthesis; sirohydrochlorin from precorrin-2: step 1/1. Its pathway is porphyrin-containing compound metabolism; siroheme biosynthesis; precorrin-2 from uroporphyrinogen III: step 1/1. It participates in porphyrin-containing compound metabolism; siroheme biosynthesis; siroheme from sirohydrochlorin: step 1/1. It functions in the pathway porphyrin-containing compound metabolism; siroheme biosynthesis; sirohydrochlorin from precorrin-2: step 1/1. In terms of biological role, multifunctional enzyme that catalyzes the SAM-dependent methylations of uroporphyrinogen III at position C-2 and C-7 to form precorrin-2 via precorrin-1. Then it catalyzes the NAD-dependent ring dehydrogenation of precorrin-2 to yield sirohydrochlorin. Finally, it catalyzes the ferrochelation of sirohydrochlorin to yield siroheme. The protein is Siroheme synthase of Salmonella typhi.